The primary structure comprises 253 residues: 5'/3'-nucleotidase SurE (253 aa).

Residues aspartate 8, aspartate 9, serine 39, and asparagine 92 each coordinate a divalent metal cation.

The protein belongs to the SurE nucleotidase family. A divalent metal cation serves as cofactor.

Its subcellular location is the cytoplasm. The enzyme catalyses a ribonucleoside 5'-phosphate + H2O = a ribonucleoside + phosphate. It catalyses the reaction a ribonucleoside 3'-phosphate + H2O = a ribonucleoside + phosphate. It carries out the reaction [phosphate](n) + H2O = [phosphate](n-1) + phosphate + H(+). In terms of biological role, nucleotidase with a broad substrate specificity as it can dephosphorylate various ribo- and deoxyribonucleoside 5'-monophosphates and ribonucleoside 3'-monophosphates with highest affinity to 3'-AMP. Also hydrolyzes polyphosphate (exopolyphosphatase activity) with the preference for short-chain-length substrates (P20-25). Might be involved in the regulation of dNTP and NTP pools, and in the turnover of 3'-mononucleotides produced by numerous intracellular RNases (T1, T2, and F) during the degradation of various RNAs. The protein is 5'/3'-nucleotidase SurE of Shigella boydii serotype 18 (strain CDC 3083-94 / BS512).